We begin with the raw amino-acid sequence, 306 residues long: Recombination-associated protein RdgC (306 aa).

It belongs to the RdgC family.

The protein localises to the cytoplasm. The protein resides in the nucleoid. Functionally, may be involved in recombination. This chain is Recombination-associated protein RdgC, found in Pseudomonas syringae pv. syringae (strain B728a).